A 397-amino-acid chain; its full sequence is Penicillopepsin-1 (397 aa).

A signal peptide spans 1 to 20 (MVVFSQVTVALTCFSAIASA). The propeptide at 21–71 (AAVRQEPPQGFTVNQVQKAVPGTRTVNLPGLYANALVKYGATVPATVHAAA) is activation peptide. A Peptidase A1 domain is found at 87-394 (YLTPVTIGSS…DSEGPRLGFA (308 aa)). Active-site residues include Asp103 and Asp285. An N-linked (GlcNAc...) asparagine glycan is attached at Asn311. The cysteines at positions 322 and 357 are disulfide-linked.

It belongs to the peptidase A1 family. In terms of assembly, monomer.

It is found in the secreted. The enzyme catalyses Hydrolysis of proteins with broad specificity similar to that of pepsin A, preferring hydrophobic residues at P1 and P1', but also cleaving 20-Gly-|-Glu-21 in the B chain of insulin. Clots milk, and activates trypsinogen.. Its function is as follows. Secreted aspartic endopeptidase that allows assimilation of proteinaceous substrates. The scissile peptide bond is attacked by a nucleophilic water molecule activated by two aspartic residues in the active site. Shows a broad primary substrate specificity. Favors hydrophobic residues at the P1 and P1' positions, but can also activate trypsinogen and hydrolyze the B chain of insulin between positions 'Gly-20' and 'Glu-21'. The polypeptide is Penicillopepsin-1 (Penicillium roqueforti).